We begin with the raw amino-acid sequence, 104 residues long: Large ribosomal subunit protein uL24 (104 aa).

Belongs to the universal ribosomal protein uL24 family. As to quaternary structure, part of the 50S ribosomal subunit.

One of two assembly initiator proteins, it binds directly to the 5'-end of the 23S rRNA, where it nucleates assembly of the 50S subunit. In terms of biological role, one of the proteins that surrounds the polypeptide exit tunnel on the outside of the subunit. This chain is Large ribosomal subunit protein uL24, found in Baumannia cicadellinicola subsp. Homalodisca coagulata.